Consider the following 133-residue polypeptide: Glycine cleavage system H protein (133 aa).

The Lipoyl-binding domain occupies 24–106 (IATIGISAYA…YGDGWLLKVR (83 aa)). Lys65 bears the N6-lipoyllysine mark.

The protein belongs to the GcvH family. As to quaternary structure, the glycine cleavage system is composed of four proteins: P, T, L and H. The cofactor is (R)-lipoate.

The glycine cleavage system catalyzes the degradation of glycine. The H protein shuttles the methylamine group of glycine from the P protein to the T protein. This is Glycine cleavage system H protein from Crocosphaera subtropica (strain ATCC 51142 / BH68) (Cyanothece sp. (strain ATCC 51142)).